We begin with the raw amino-acid sequence, 130 residues long: Small ribosomal subunit protein uS9 (130 aa).

The disordered stretch occupies residues threonine 105 to arginine 130. The segment covering lysine 111–arginine 130 has biased composition (basic residues).

This sequence belongs to the universal ribosomal protein uS9 family.

The sequence is that of Small ribosomal subunit protein uS9 from Listeria welshimeri serovar 6b (strain ATCC 35897 / DSM 20650 / CCUG 15529 / CIP 8149 / NCTC 11857 / SLCC 5334 / V8).